A 352-amino-acid chain; its full sequence is Pyruvate dehydrogenase E1 component subunit beta, mitochondrial (352 aa).

Residues 1–21 constitute a mitochondrion transit peptide; it reads MALRKCGNLFVARLAGTSTRA. Position 81 (E81) interacts with thiamine diphosphate. The K(+) site is built by I134, A182, I183, D185, and N187.

In terms of assembly, tetramer of 2 alpha and 2 beta subunits. It depends on thiamine diphosphate as a cofactor.

It localises to the mitochondrion matrix. It carries out the reaction N(6)-[(R)-lipoyl]-L-lysyl-[protein] + pyruvate + H(+) = N(6)-[(R)-S(8)-acetyldihydrolipoyl]-L-lysyl-[protein] + CO2. The pyruvate dehydrogenase complex catalyzes the overall conversion of pyruvate to acetyl-CoA and CO(2). It contains multiple copies of three enzymatic components: pyruvate dehydrogenase (E1), dihydrolipoamide acetyltransferase (E2) and lipoamide dehydrogenase (E3). The chain is Pyruvate dehydrogenase E1 component subunit beta, mitochondrial (pdhb-1) from Caenorhabditis elegans.